The chain runs to 465 residues: UDP-N-acetylmuramoylalanine--D-glutamate ligase (465 aa).

115-121 (GTDGKTT) serves as a coordination point for ATP.

The protein belongs to the MurCDEF family.

It localises to the cytoplasm. It carries out the reaction UDP-N-acetyl-alpha-D-muramoyl-L-alanine + D-glutamate + ATP = UDP-N-acetyl-alpha-D-muramoyl-L-alanyl-D-glutamate + ADP + phosphate + H(+). It functions in the pathway cell wall biogenesis; peptidoglycan biosynthesis. In terms of biological role, cell wall formation. Catalyzes the addition of glutamate to the nucleotide precursor UDP-N-acetylmuramoyl-L-alanine (UMA). This is UDP-N-acetylmuramoylalanine--D-glutamate ligase from Chlorobaculum tepidum (strain ATCC 49652 / DSM 12025 / NBRC 103806 / TLS) (Chlorobium tepidum).